A 354-amino-acid polypeptide reads, in one-letter code: Uroporphyrinogen decarboxylase (354 aa).

Residues 27 to 31 (RQAGR), Asp77, Tyr154, Thr209, and His327 each bind substrate.

The protein belongs to the uroporphyrinogen decarboxylase family. In terms of assembly, homodimer.

Its subcellular location is the cytoplasm. It carries out the reaction uroporphyrinogen III + 4 H(+) = coproporphyrinogen III + 4 CO2. It functions in the pathway porphyrin-containing compound metabolism; protoporphyrin-IX biosynthesis; coproporphyrinogen-III from 5-aminolevulinate: step 4/4. In terms of biological role, catalyzes the decarboxylation of four acetate groups of uroporphyrinogen-III to yield coproporphyrinogen-III. This is Uroporphyrinogen decarboxylase from Histophilus somni (strain 2336) (Haemophilus somnus).